A 307-amino-acid chain; its full sequence is NmrA-like family domain-containing oxidoreductase flvB (307 aa).

NADP(+) contacts are provided by residues 4–9, 32–36, 53–54, 74–76, and 148–151; these read LITGAT, SSSSP, DY, STN, and YVEG.

It belongs to the NmrA-type oxidoreductase family.

It carries out the reaction (2S)-5,5-dimethyl-2,3,4,5-tetrahydropyridine-2,6-dicarboxylate + NADPH + 2 H(+) = (6S)-3,3-dimethylpiperidine-2,6-dicarboxylate + NADP(+). The catalysed reaction is (2S)-5,5-dimethyl-2,3,4,5-tetrahydropyridine-2,6-dicarboxylate + NADH + 2 H(+) = (6S)-3,3-dimethylpiperidine-2,6-dicarboxylate + NAD(+). Its pathway is secondary metabolite biosynthesis; terpenoid biosynthesis. Its function is as follows. NmrA-like family domain-containing oxidoreductase; part of the gene cluster that mediates the biosynthesis of flavunoidine, an alkaloidal terpenoid with a tetracyclic cage-like core connected to dimethylcadaverine via a C-N bond and acylated with 5,5-dimethyl-L-pipecolate. The tetracyclic core is synthesized by the terpene cyclase flvE and the cytochrome P450 monooxygenase flvD. The terpene cyclase flvE catalyzes the cyclization of farnesyl pyrophosphate (FPP) to form (1R,4R,5S)-(+)-acoradiene and the cytochrome P450 monooxygenase flvD is then responsible for oxidative conversion of (1R,4R,5S)-(+)-acoradiene into the tetracyclic cage present in the final product flavunoidine. In parallel, the N-methyltransferase flvH dimethylates L-lysine to give N,N-dimethyl-L-Lysin which is decarboxylated by flvG to afford dimethylcadaverine. The terpene cyclase-like protein flvF is the enzyme that attaches the dimethylcadaverine precusor at the C-7 of the tetracyclic cage to yield pre-flavunoidine. The cytochrome monooxygenase flvC hydroxylates the C-10 position of pre-flavunoidine whereas the NRPS flvI acylates the terpenoid core at the hydroxylated C-10 with dimethylpipecolate to yield final flavunoidine. The bifunctional enzyme flvA and the dehydrogenase flvB are responsible for the synthesis of the dimethylpipecolate precursor. The PLP-dependent lyase domain of flvA might use L-O-acetyl-homoserine and alpha-keto-isovalerate to form an intermediary ketone that can cyclize intramolecularly to yield an imine. The imine can be reduced by flvB to yield the 6-carboxylated pipecolate. The C-terminal alpha-KG-dependent oxygenase domain of flvA is then proposed to catalyze the decarboxylation to yield dimethylpipecolate. This chain is NmrA-like family domain-containing oxidoreductase flvB, found in Aspergillus flavus (strain ATCC 200026 / FGSC A1120 / IAM 13836 / NRRL 3357 / JCM 12722 / SRRC 167).